Consider the following 35-residue polypeptide: Hemocyanin A chain (35 aa).

This sequence belongs to the tyrosinase family. Hemocyanin subfamily. Hemolymph.

It is found in the secreted. The protein localises to the extracellular space. In terms of biological role, hemocyanins are copper-containing oxygen carriers occurring freely dissolved in the hemolymph of many mollusks and arthropods. The protein is Hemocyanin A chain of Cherax destructor (Common yabby crayfish).